A 178-amino-acid chain; its full sequence is ADP-ribosylation factor-like protein 5 (178 aa).

Gly2 carries the N-myristoyl glycine lipid modification. GTP is bound by residues Gly24–Thr31, Asp67–Gln71, and Asn126–Asp129.

It belongs to the small GTPase superfamily. Arf family.

Its subcellular location is the golgi apparatus. In terms of biological role, GTP-binding protein that may be involved in protein trafficking; may modulate vesicle budding and uncoating within the Golgi apparatus. Plays a role in the shedding of pathogen spores from intestinal cells. This chain is ADP-ribosylation factor-like protein 5 (arl-5), found in Caenorhabditis elegans.